We begin with the raw amino-acid sequence, 394 residues long: 1-deoxy-D-xylulose 5-phosphate reductoisomerase (394 aa).

Residues Thr10, Gly11, Ser12, Ile13, Asn38, and Asn125 each coordinate NADPH. Lys126 is a binding site for 1-deoxy-D-xylulose 5-phosphate. NADPH is bound at residue Glu127. Asp151 contributes to the Mn(2+) binding site. Ser152, Glu153, Ser182, and His205 together coordinate 1-deoxy-D-xylulose 5-phosphate. Position 153 (Glu153) interacts with Mn(2+). Residue Gly211 participates in NADPH binding. Residues Ser218, Asn223, Lys224, and Glu227 each contribute to the 1-deoxy-D-xylulose 5-phosphate site. Glu227 contributes to the Mn(2+) binding site.

This sequence belongs to the DXR family. Requires Mg(2+) as cofactor. It depends on Mn(2+) as a cofactor.

It catalyses the reaction 2-C-methyl-D-erythritol 4-phosphate + NADP(+) = 1-deoxy-D-xylulose 5-phosphate + NADPH + H(+). The protein operates within isoprenoid biosynthesis; isopentenyl diphosphate biosynthesis via DXP pathway; isopentenyl diphosphate from 1-deoxy-D-xylulose 5-phosphate: step 1/6. In terms of biological role, catalyzes the NADPH-dependent rearrangement and reduction of 1-deoxy-D-xylulose-5-phosphate (DXP) to 2-C-methyl-D-erythritol 4-phosphate (MEP). The sequence is that of 1-deoxy-D-xylulose 5-phosphate reductoisomerase from Methylococcus capsulatus (strain ATCC 33009 / NCIMB 11132 / Bath).